The primary structure comprises 516 residues: MAVWHSANGKVYLPPSTPVARVQSTDEYIQRTNIYYHAFSDRLLTVGHPYFNVYDITGNKLEVPKVSGNQHRVFRLKLPDPNRFALADMSVYNPDKERLVWSCRGLEIGRGQPLGVGSTGHPLFNKLKDTENSNSYIKSSKDDRQDTSFDPKQIQMFIVGCTPCIGEHWDKAIPCEKERQDNRLCPPIELKTTYIEDGDMADIGFGNLNFKNLQESRSDVSLDIVNETCKYPDFLKMQNDVYGDACFFYARREQCYARHFFVRGGKTGDDIPDARIDNGTFKNQFFIPGADGQDQKTIGNAMYYPTVSGSLVSSDAQLFNRPFWLQRAQGHNNGILWANQMFITVVDNTRNTNFSISIYNNNGALKDINDYTAEQFREYQRHVEEYEISLILQLCKVPLKAEVLAQINAMNSSLLEDWQLGFVPTPDNPIQDTYRYIDSLATRCPDKTPPKEKEDPYKGLKFWDVDLTERLSLDLDQYSLGRKFLFQAGLQQTTVSGTKSVSYRGFTRGTKRKRKQ.

The protein belongs to the papillomaviridae L1 protein family. In terms of assembly, self-assembles into homopentamers. The capsid has an icosahedral symmetry and consists of 72 capsomers, with each capsomer being a pentamer of L1. Interacts with the minor capsid protein L2; this interaction is necessary for viral genome encapsidation. Interacts with protein E2; this interaction enhances E2-dependent replication and transcription activation.

The protein localises to the virion. It is found in the host nucleus. In terms of biological role, forms an icosahedral capsid with a T=7 symmetry and a 50 nm diameter. The capsid is composed of 72 pentamers linked to each other by disulfide bonds and associated with L2 proteins. Binds to heparan sulfate proteoglycans on cell surface of basal layer keratinocytes to provide initial virion attachment. This binding mediates a conformational change in the virus capsid that facilitates efficient infection. The virion enters the host cell via endocytosis. During virus trafficking, L1 protein dissociates from the viral DNA and the genomic DNA is released to the host nucleus. The virion assembly takes place within the cell nucleus. Encapsulates the genomic DNA together with protein L2. This chain is Major capsid protein L1, found in Homo sapiens (Human).